The sequence spans 434 residues: O-phosphoseryl-tRNA(Sec) selenium transferase (434 aa).

Residues 1–40 are tetramerization; it reads MGLNITGLIPKHMENRGKLTLKENLKIIENILEQRKAPEN. Position 71 (Arg71) interacts with pyridoxal 5'-phosphate. The phosphate loop (P-loop) stretch occupies residues 92-102; the sequence is GRSGNLIDPQP. Substrate contacts are provided by Arg93, Ser94, and Gln101. At Lys277 the chain carries N6-(pyridoxal phosphate)lysine. Arg306 provides a ligand contact to substrate.

The protein belongs to the SepSecS family. Homotetramer. Requires pyridoxal 5'-phosphate as cofactor.

The enzyme catalyses O-phospho-L-seryl-tRNA(Sec) + selenophosphate + H2O = L-selenocysteinyl-tRNA(Sec) + 2 phosphate. It functions in the pathway aminoacyl-tRNA biosynthesis; selenocysteinyl-tRNA(Sec) biosynthesis; selenocysteinyl-tRNA(Sec) from L-seryl-tRNA(Sec) (archaeal/eukaryal route): step 2/2. Functionally, converts O-phosphoseryl-tRNA(Sec) to selenocysteinyl-tRNA(Sec) required for selenoprotein biosynthesis. The polypeptide is O-phosphoseryl-tRNA(Sec) selenium transferase (spcS) (Methanocaldococcus jannaschii (strain ATCC 43067 / DSM 2661 / JAL-1 / JCM 10045 / NBRC 100440) (Methanococcus jannaschii)).